A 98-amino-acid chain; its full sequence is NADH-ubiquinone oxidoreductase chain 4L (98 aa).

3 helical membrane passes run 1 to 21 (MTPV…GLAF), 29 to 49 (ALLC…LWAL), and 58 to 78 (VAPM…LALL).

The protein belongs to the complex I subunit 4L family.

It is found in the mitochondrion membrane. It carries out the reaction a ubiquinone + NADH + 5 H(+)(in) = a ubiquinol + NAD(+) + 4 H(+)(out). Its function is as follows. Core subunit of the mitochondrial membrane respiratory chain NADH dehydrogenase (Complex I) which catalyzes electron transfer from NADH through the respiratory chain, using ubiquinone as an electron acceptor. Part of the enzyme membrane arm which is embedded in the lipid bilayer and involved in proton translocation. The polypeptide is NADH-ubiquinone oxidoreductase chain 4L (MT-ND4L) (Salmo salar (Atlantic salmon)).